Here is a 370-residue protein sequence, read N- to C-terminus: Death-associated protein kinase 2 (370 aa).

The Protein kinase domain occupies 23-285; that stretch reads YDIGEELGSG…IQEALRHPWI (263 aa). ATP is bound by residues 29-37 and K52; that span reads LGSGQFAIV. The active-site Proton acceptor is the D149. Residues 277 to 344 form a calmodulin-binding region; it reads QEALRHPWIT…KVHLRPDEDL (68 aa). The autoinhibitory domain stretch occupies residues 292–301; the sequence is QAMVRRESVV. S299 is subject to Phosphoserine. At S318 the chain carries Phosphoserine; by autocatalysis. The interval 348 to 370 is disordered; that stretch reads ESDTEEDIARRKALHPRRRSSTS. S349 bears the Phosphoserine mark. Over residues 358–370 the composition is skewed to basic residues; sequence RKALHPRRRSSTS. T369 is subject to Phosphothreonine; by PKB/AKT1.

Belongs to the protein kinase superfamily. CAMK Ser/Thr protein kinase family. DAP kinase subfamily. Homodimer in its autoinhibited state. Active as monomer. Isoform 2 but not isoform 1 can interact with ATF4. Interacts with 14-3-3 proteins YWHAB, YWHAE, YWHAG, YWHAH, YWHAQ, YWHAZ and SFN; the interaction requires DAPK2 phosphorylation at Thr-369 and suppresses DAPK2 kinase activity and DAPK2-induced apoptosis. Mg(2+) is required as a cofactor. Autophosphorylation at Ser-318 inhibits its catalytic activity. Dephosphorylated at Ser-318 in response to activated Fas and TNF-alpha receptors. As to expression, expressed in neutrophils and eosinophils. Isoform 2 is expressed in embryonic stem cells (at protein level). Isoform 1 is ubiquitously expressed in all tissue types examined with high levels in heart, lung and skeletal muscle.

The protein localises to the cytoplasm. The protein resides in the cytoplasmic vesicle. Its subcellular location is the autophagosome lumen. The enzyme catalyses L-seryl-[protein] + ATP = O-phospho-L-seryl-[protein] + ADP + H(+). It catalyses the reaction L-threonyl-[protein] + ATP = O-phospho-L-threonyl-[protein] + ADP + H(+). Activated by Ca(2+)/calmodulin. Regulated by a double locking mechanism, involving autophosphorylation at Ser-318, calmodulin binding, and dimerization. In the inactive state, Ser-318 is phosphorylated, and the kinase is dimeric. Activation involves: dephosphorylation at Ser-318, release-of-autoinhibition mechanism where calmodulin binding induces a conformational change that relieves the steric block of the active site by the autoinhibitory domain, and generation of the monomeric active form of the kinase. Calcium/calmodulin-dependent serine/threonine kinase involved in multiple cellular signaling pathways that trigger cell survival, apoptosis, and autophagy. Regulates both type I apoptotic and type II autophagic cell death signals, depending on the cellular setting. The former is caspase-dependent, while the latter is caspase-independent and is characterized by the accumulation of autophagic vesicles. Acts as a mediator of anoikis and a suppressor of beta-catenin-dependent anchorage-independent growth of malignant epithelial cells. May play a role in granulocytic maturation. Regulates granulocytic motility by controlling cell spreading and polarization. In terms of biological role, isoform 2 is not regulated by calmodulin. It can phosphorylate MYL9. It can induce membrane blebbing and autophagic cell death. This is Death-associated protein kinase 2 (DAPK2) from Homo sapiens (Human).